A 317-amino-acid polypeptide reads, in one-letter code: MLHIFLSYFYIIFFLIVFPTQLLLLYVIIFHSPKHLKTLKRIFLCNCSCQIFSMITLVLLQARQVSNLNPVELWCYGPLRYLDAIVAYTMYVLCEGTVLMSSILIFITMYVKYEAVRSIHRERSAKFSVIILSLSPLFITMSAEAYLTIEYHLPIEYQEKFSAINSNLGDHTVIGYIALDNIPAQIVFCTICGFFVIFPLIMFCLRRNIILFINSKLDLSSTTMRQQNRALINGLTLQAFLPLFCVCPIFICSFVALITKTEILLEQYFVSVVLLLPTFFEPYITFYTVSHYRKQVRIWLGKENMGSMMLVVSVSRL.

7 helical membrane-spanning segments follow: residues Phe-9–Ile-29, Ile-42–Ala-62, Tyr-91–Val-111, Val-129–Ile-149, Gln-185–Leu-205, Ala-239–Thr-259, and Phe-269–Val-289.

Belongs to the nematode receptor-like protein srd family.

It localises to the membrane. The sequence is that of Serpentine receptor class delta-46 (srd-46) from Caenorhabditis elegans.